Here is a 113-residue protein sequence, read N- to C-terminus: uncharacterized protein (113 aa).

Residues 7-29 form a helical membrane-spanning segment; it reads FFILIVLLFTVFSLKEFIPNTFC.

It is found in the membrane. This is an uncharacterized protein from Aquifex aeolicus (strain VF5).